The following is a 455-amino-acid chain: SVGFKAGVKDYKLTYYTPDYQTKDTDILAAFRVTPQPGVPPEEAGAAVAAESSTGTWTTVWTDGLTSLDRYKGRCYHIEPVAGEESQFIAYVAYPLDLFEEGSVTNMFTSIVGNVFGFKALRALRLEDLRIPNAYVKTFQGPPHGIQVERDKLNKYGRPLLGCTIKPKLGLSAKNYGRAVYECLRGGLDFTKDDENVNSQPFMRWRDRFLFCAEALYKAQAETGEIKGHYLNATAGTCEEMIKRAVFARELGVPIVMHDYLTGGFTANTSLAHYCRDNGLLLHIHRAMHAVIDRQKNHGMHFRVLAKALRLSGGDHIHSGTVVGKLEGEREITLGFVDLLRDDFVEKDRSRGIYFTQDWVSLPGVLPVASGGIHVWHMPALTEIFGDDSVLQFGGGTLGHPWGNAPGAVANRVALEACVQARNEGRDLASEGNQIIREASKWSPELAAACEVWKE.

Position 5 is an N6,N6,N6-trimethyllysine (lysine 5). Residues asparagine 114 and threonine 164 each coordinate substrate. The Proton acceptor role is filled by lysine 166. Lysine 168 provides a ligand contact to substrate. Residues lysine 192, aspartate 194, and glutamate 195 each contribute to the Mg(2+) site. Lysine 192 bears the N6-carboxylysine mark. The active-site Proton acceptor is histidine 285. 3 residues coordinate substrate: arginine 286, histidine 318, and serine 370.

It belongs to the RuBisCO large chain family. Type I subfamily. In terms of assembly, heterohexadecamer of 8 large chains and 8 small chains; disulfide-linked. The disulfide link is formed within the large subunit homodimers. It depends on Mg(2+) as a cofactor. Post-translationally, the disulfide bond which can form in the large chain dimeric partners within the hexadecamer appears to be associated with oxidative stress and protein turnover.

The protein localises to the plastid. It localises to the chloroplast. It catalyses the reaction 2 (2R)-3-phosphoglycerate + 2 H(+) = D-ribulose 1,5-bisphosphate + CO2 + H2O. The enzyme catalyses D-ribulose 1,5-bisphosphate + O2 = 2-phosphoglycolate + (2R)-3-phosphoglycerate + 2 H(+). Its function is as follows. RuBisCO catalyzes two reactions: the carboxylation of D-ribulose 1,5-bisphosphate, the primary event in carbon dioxide fixation, as well as the oxidative fragmentation of the pentose substrate in the photorespiration process. Both reactions occur simultaneously and in competition at the same active site. This Lupinus paraguariensis (Lupine) protein is Ribulose bisphosphate carboxylase large chain.